A 402-amino-acid chain; its full sequence is N-acetyltransferase Eis (402 aa).

An N-acetyltransferase domain is found at 3-154 (VTLCSPTEDD…RFARFHADAP (152 aa)). Acetyl-CoA contacts are provided by residues 85–87 (VAV), 93–98 (RRGLLR), and 121–122 (SE). Catalysis depends on tyrosine 126, which acts as the Proton donor. Residue phenylalanine 402 is the Proton acceptor; via carboxylate of the active site.

It belongs to the acetyltransferase Eis family. Homohexamer; trimer of dimers.

Its subcellular location is the secreted. The protein resides in the host cytoplasmic vesicle. It localises to the host phagosome. It is found in the extracellular vesicle. The protein localises to the bacterial extracellular vesicle. Its subcellular location is the host extracellular space. The enzyme catalyses L-lysyl-[protein] + acetyl-CoA = N(6)-acetyl-L-lysyl-[protein] + CoA + H(+). In terms of biological role, effector that is released into the host cell and affects host immune responses. Acts as an acetyltransferase that acetylates lysine residues of host proteins. This Mycobacterium bovis (strain BCG / Pasteur 1173P2) protein is N-acetyltransferase Eis.